Consider the following 311-residue polypeptide: Pyrimidine-specific ribonucleoside hydrolase RihA (311 aa).

The active site involves H240.

The protein belongs to the IUNH family. RihA subfamily.

Functionally, hydrolyzes with equal efficiency cytidine or uridine to ribose and cytosine or uracil, respectively. This Escherichia coli (strain SMS-3-5 / SECEC) protein is Pyrimidine-specific ribonucleoside hydrolase RihA.